A 410-amino-acid polypeptide reads, in one-letter code: MAMSNLPRDLLEEVLSRVPVKSIAAVRSTCKNWNSLTYGQSFTKKLYGKTMATKEKEFLVVMTMDLEVYLMRVNLHGIHKDDNNVKSSIMQKAKLIRLNDDRVRVDDICKVFHCDGLLLCITIGIRLVVCNPYCGQTRCIKTRRDYHITDNYALGHEKMKNSPLRNYKILVFHDKSFLQNSWFEIYNFNSDSWKVLYFTCDWKLPFSQLVVSLKGNTYWFAREMYIHGPRIDLPDFLICFDFTTERFGPRLHLPFHSRCVDTVTLASVREEQLAVLFQDSKTLILEVWITTKIEPNAVSWSSKVFLEVNMSPLTGFQFNRSFGSFFIVEEKNVVVVPIKGGHFKRNLAYIIGKDEYFKEVDLGVPSSYIYFSPHVCSYVPSLVQIKKDAQVMLQHHNVSAEKHHEFCASL.

The F-box domain occupies 1–46 (MAMSNLPRDLLEEVLSRVPVKSIAAVRSTCKNWNSLTYGQSFTKKL).

This Arabidopsis thaliana (Mouse-ear cress) protein is F-box protein At5g36730.